The primary structure comprises 418 residues: MIHSLFLINCSGDIFLEKHWKSVVSQSVCDYFFEAQEKAADVENVPPVISTPHHYLISIYRDKLFFVSVIQTEVPPLFVIEFLHRVADTFQDYFGECSEAAIKDNVVIVYELLEEMLDNGFPLATESNILKELIKPPTILRSVVNSITGSSNVGDTLPTGQLSNIPWRRAGVKYTNNEAYFDVVEEIDAIIDKSGSTVFAEIQGVIDACIKLSGMPDLSLSFMNPRLLDDVSFHPCIRFKRWESERVLSFIPPDGNFRLISYRVSSQNLVAIPVYVKHSISFKENSSCGRFDITIGPKQNMGKTIEGITVTVHMPKVVLNMNLTPTQGSYTFDPVTKVLAWDVGKITPQKLPSLKGLVNLQSGAPKPEENPNLNIQFKIQQLAISGLKVNRLDMYGEKYKPFKGVKYVTKAGKFQVRT.

Residues 176–417 (NNEAYFDVVE…VTKAGKFQVR (242 aa)) form the MHD domain.

This sequence belongs to the adaptor complexes medium subunit family. Adaptor protein complex 3 (AP-3) is a heterotetramer composed of two large adaptins (delta-type subunit AP3D1 and beta-type subunit AP3B1 or AP3B2), a medium adaptin (mu-type subunit AP3M1 or AP3M2) and a small adaptin (sigma-type subunit APS1 or AP3S2). Interacts with AGAP1. AP-3 associates with the BLOC-1 complex.

The protein resides in the golgi apparatus. It is found in the cytoplasmic vesicle membrane. Part of the AP-3 complex, an adaptor-related complex which is not clathrin-associated. The complex is associated with the Golgi region as well as more peripheral structures. It facilitates the budding of vesicles from the Golgi membrane and may be directly involved in trafficking to lysosomes. In concert with the BLOC-1 complex, AP-3 is required to target cargos into vesicles assembled at cell bodies for delivery into neurites and nerve terminals. In Mus musculus (Mouse), this protein is AP-3 complex subunit mu-1 (Ap3m1).